Here is a 165-residue protein sequence, read N- to C-terminus: Transcription elongation factor A protein-like 1 (165 aa).

The segment at 1–101 (MENTRSENEE…EQPPCGVGKH (101 aa)) is disordered. Acidic residues predominate over residues 33–60 (CSEEDQSSEDLSSEEQSSEEEFFPEELL).

This sequence belongs to the TFS-II family. TFA subfamily.

Its subcellular location is the nucleus. In terms of biological role, may be involved in transcriptional regulation. Modulates various viral and cellular promoters in a promoter context-dependent manner. Does not bind DNA directly. In Mus musculus (Mouse), this protein is Transcription elongation factor A protein-like 1.